Here is a 421-residue protein sequence, read N- to C-terminus: MSGLPDHLRRPVRGMRDWLPHQYYALQQLEALLSRVAESFGYRRVETPVVEHFEVLARKAGQEIVNEIYYFRDKAGRELGLRFDMTVPIARVVSYNLDLPRPIRWYYFTKVFRYDEPQHGRYREFYQFGVELIGSASPRADAEVVHLLAESLAAAGASNYVIKLNDRRVVDKLLEGMGLAAYKDVVYKALDKRYKAPREEVVGIMTRGGVPPSKAEELYEKATEMPLQEAVDFVTRIDKELGGFYAAFVKYLEAAVGLERLIFDLSIVRGLDYYTGVVFEAFAGEYKLAVGGGGRYDDLLQLYSGVKTPALGFAIGVERLMEAVGLQAVEKPLDYYIYIFDESAYQTAIYIARELRRKGYSAVVELGDKGLKDAFEYVLKIGTRFLVILGKKELEKGVVKVRDLQKREEVEKPIDEFIRGA.

This sequence belongs to the class-II aminoacyl-tRNA synthetase family.

It is found in the cytoplasm. The catalysed reaction is tRNA(His) + L-histidine + ATP = L-histidyl-tRNA(His) + AMP + diphosphate + H(+). The protein is Histidine--tRNA ligase of Pyrobaculum calidifontis (strain DSM 21063 / JCM 11548 / VA1).